Here is a 208-residue protein sequence, read N- to C-terminus: MSGKKIVSKTTTVGIVVGDYVVLAADKRATAGSLVAHKRVKKIIRIDDYIAMTISGLVADAEIIAEQARFIARKYKLELGRPIKVSALASNLSIILNAYLRMSPYIVQLLLGGYDDNGPHLFYIDLFGSLSEEKYMATGSGSPTAFGVLEEEYRSDLSLDEAKELAFKAVSAATKRDGFSGEGVDIVVIGPNTYVEETKLFKRSIIAK.

Positions 1-9 (MSGKKIVSK) are cleaved as a propeptide — removed in mature form; by autocatalysis. Catalysis depends on T10, which acts as the Nucleophile.

Belongs to the peptidase T1B family. As to quaternary structure, the 20S proteasome core is composed of 14 alpha and 14 beta subunits that assemble into four stacked heptameric rings, resulting in a barrel-shaped structure. The two inner rings, each composed of seven catalytic beta subunits, are sandwiched by two outer rings, each composed of seven alpha subunits. The catalytic chamber with the active sites is on the inside of the barrel. Has a gated structure, the ends of the cylinder being occluded by the N-termini of the alpha-subunits. Is capped at one or both ends by the proteasome regulatory ATPase, PAN.

The protein localises to the cytoplasm. It carries out the reaction Cleavage of peptide bonds with very broad specificity.. Its activity is regulated as follows. The formation of the proteasomal ATPase PAN-20S proteasome complex, via the docking of the C-termini of PAN into the intersubunit pockets in the alpha-rings, triggers opening of the gate for substrate entry. Interconversion between the open-gate and close-gate conformations leads to a dynamic regulation of the 20S proteasome proteolysis activity. Its function is as follows. Component of the proteasome core, a large protease complex with broad specificity involved in protein degradation. This is Proteasome subunit beta 2 from Staphylothermus marinus (strain ATCC 43588 / DSM 3639 / JCM 9404 / F1).